Here is a 160-residue protein sequence, read N- to C-terminus: Nucleotide-binding protein Ping_2261 (160 aa).

This sequence belongs to the YajQ family.

Nucleotide-binding protein. In Psychromonas ingrahamii (strain DSM 17664 / CCUG 51855 / 37), this protein is Nucleotide-binding protein Ping_2261.